The chain runs to 67 residues: Potassium channel toxin alpha-KTx (67 aa).

An N-terminal signal peptide occupies residues 1-25 (MKNIAMKTTVVLTILLLSVLTAINA). Positions 26-31 (DTMKKR) are excised as a propeptide. 4 disulfides stabilise this stretch: Cys35–Cys54, Cys40–Cys59, Cys44–Cys61, and Cys49–Cys64.

The protein belongs to the short scorpion toxin superfamily. Potassium channel inhibitor family. Expressed by the venom gland.

The protein resides in the secreted. Blocks Kv1.1/KCNA1, Kv1.2/KCNA2 and Kv1.3/KCNA3 voltage-gated potassium channels. This chain is Potassium channel toxin alpha-KTx, found in Hoffmannihadrurus gertschi (Scorpion).